Here is a 156-residue protein sequence, read N- to C-terminus: Small ribosomal subunit protein uS7 (156 aa).

This sequence belongs to the universal ribosomal protein uS7 family. In terms of assembly, part of the 30S ribosomal subunit. Contacts proteins S9 and S11.

One of the primary rRNA binding proteins, it binds directly to 16S rRNA where it nucleates assembly of the head domain of the 30S subunit. Is located at the subunit interface close to the decoding center, probably blocks exit of the E-site tRNA. The protein is Small ribosomal subunit protein uS7 of Pseudomonas syringae pv. tomato (strain ATCC BAA-871 / DC3000).